The sequence spans 132 residues: Large ribosomal subunit protein uL14 (132 aa).

The protein belongs to the universal ribosomal protein uL14 family. In terms of assembly, part of the 50S ribosomal subunit. Forms a cluster with proteins L3 and L24e, part of which may contact the 16S rRNA in 2 intersubunit bridges.

Functionally, binds to 23S rRNA. Forms part of two intersubunit bridges in the 70S ribosome. The polypeptide is Large ribosomal subunit protein uL14 (Methanosphaera stadtmanae (strain ATCC 43021 / DSM 3091 / JCM 11832 / MCB-3)).